Here is a 29-residue protein sequence, read N- to C-terminus: Cyclotide psyleio D (29 aa).

Residues 1–29 constitute a cross-link (cyclopeptide (Gly-Asp)); it reads GLPVCGESCFGGTCNTPGCSCTWPVCTRD. 3 disulfides stabilise this stretch: Cys-5–Cys-19, Cys-9–Cys-21, and Cys-14–Cys-26.

Post-translationally, this is a cyclic peptide.

In terms of biological role, probably participates in a plant defense mechanism. In Psychotria brachyceras, this protein is Cyclotide psyleio D.